A 201-amino-acid chain; its full sequence is Glycerol-3-phosphate acyltransferase (201 aa).

Helical transmembrane passes span 5 to 25, 55 to 75, 88 to 108, 118 to 138, and 164 to 184; these read LLGA…FGVV, KMGV…ILVA, WVTA…WLGF, LGIF…GYAV, and TYGP…LIFL.

This sequence belongs to the PlsY family. In terms of assembly, probably interacts with PlsX.

The protein localises to the cell inner membrane. It catalyses the reaction an acyl phosphate + sn-glycerol 3-phosphate = a 1-acyl-sn-glycero-3-phosphate + phosphate. Its pathway is lipid metabolism; phospholipid metabolism. Functionally, catalyzes the transfer of an acyl group from acyl-phosphate (acyl-PO(4)) to glycerol-3-phosphate (G3P) to form lysophosphatidic acid (LPA). This enzyme utilizes acyl-phosphate as fatty acyl donor, but not acyl-CoA or acyl-ACP. This Anaeromyxobacter sp. (strain K) protein is Glycerol-3-phosphate acyltransferase.